We begin with the raw amino-acid sequence, 158 residues long: NADH-quinone oxidoreductase subunit B (158 aa).

Cys-37, Cys-38, Cys-102, and Cys-132 together coordinate [4Fe-4S] cluster.

The protein belongs to the complex I 20 kDa subunit family. NDH-1 is composed of 14 different subunits. Subunits NuoB, C, D, E, F, and G constitute the peripheral sector of the complex. Requires [4Fe-4S] cluster as cofactor.

The protein localises to the cell inner membrane. It catalyses the reaction a quinone + NADH + 5 H(+)(in) = a quinol + NAD(+) + 4 H(+)(out). Its function is as follows. NDH-1 shuttles electrons from NADH, via FMN and iron-sulfur (Fe-S) centers, to quinones in the respiratory chain. Couples the redox reaction to proton translocation (for every two electrons transferred, four hydrogen ions are translocated across the cytoplasmic membrane), and thus conserves the redox energy in a proton gradient. This is NADH-quinone oxidoreductase subunit B from Nitrosomonas europaea (strain ATCC 19718 / CIP 103999 / KCTC 2705 / NBRC 14298).